Reading from the N-terminus, the 563-residue chain is 5-aminolevulinate synthase, mitochondrial (563 aa).

The N-terminal 18 residues, Met-1–Thr-18, are a transit peptide targeting the mitochondrion. Substrate-binding residues include Arg-137, Ser-251, and Lys-270. Pyridoxal 5'-phosphate contacts are provided by Ser-303, His-331, and Thr-373. Lys-376 is a catalytic residue. Lys-376 is subject to N6-(pyridoxal phosphate)lysine. Thr-405 and Thr-406 together coordinate pyridoxal 5'-phosphate. Residue Thr-491 coordinates substrate.

This sequence belongs to the class-II pyridoxal-phosphate-dependent aminotransferase family. Homodimer. It depends on pyridoxal 5'-phosphate as a cofactor.

It localises to the mitochondrion matrix. The catalysed reaction is succinyl-CoA + glycine + H(+) = 5-aminolevulinate + CO2 + CoA. It functions in the pathway porphyrin-containing compound metabolism; protoporphyrin-IX biosynthesis; 5-aminolevulinate from glycine: step 1/1. Functionally, catalyzes the synthesis of 5-aminolevulinate (ALA) from succinyl-CoA and glycine, the first and rate-limiting step in heme biosynthesis. This is 5-aminolevulinate synthase, mitochondrial (HEM1) from Yarrowia lipolytica (strain CLIB 122 / E 150) (Yeast).